The chain runs to 1088 residues: Methionine S-methyltransferase (1088 aa).

The protein belongs to the class I-like SAM-binding methyltransferase superfamily. In terms of assembly, homotetramer.

It is found in the cytoplasm. It carries out the reaction L-methionine + S-adenosyl-L-methionine = S-methyl-L-methionine + S-adenosyl-L-homocysteine. Its function is as follows. Catalyzes the S-methylmethionine (SMM) biosynthesis from adenosyl-L-homocysteine (AdoMet) and methionine. SMM biosynthesis (by MMT1) and degradation (by HMT-1, HMT-2 and HMT-3) constitute the SMM cycle in plants, which is probably required to achieve short term control of AdoMet level. Also able to catalyze the selenium-methylmethionine (SeMM) from AdoMet and selenium-methionine (SeMet). May play a role in phoem sulfur transport; such function is however not essential. This Wollastonia biflora (Beach sunflower) protein is Methionine S-methyltransferase (MMT1).